The chain runs to 292 residues: uncharacterized protein (292 aa).

Active-site charge relay system residues include T43 and Y105. The Proton donor role is filled by Y131. K159 (schiff-base intermediate with substrate) is an active-site residue.

The protein belongs to the DapA family. Homotetramer.

The protein resides in the cytoplasm. This is an uncharacterized protein from Thermococcus kodakarensis (strain ATCC BAA-918 / JCM 12380 / KOD1) (Pyrococcus kodakaraensis (strain KOD1)).